The primary structure comprises 180 residues: ATP synthase subunit delta (180 aa).

This sequence belongs to the ATPase delta chain family. As to quaternary structure, F-type ATPases have 2 components, F(1) - the catalytic core - and F(0) - the membrane proton channel. F(1) has five subunits: alpha(3), beta(3), gamma(1), delta(1), epsilon(1). F(0) has three main subunits: a(1), b(2) and c(10-14). The alpha and beta chains form an alternating ring which encloses part of the gamma chain. F(1) is attached to F(0) by a central stalk formed by the gamma and epsilon chains, while a peripheral stalk is formed by the delta and b chains.

It localises to the cell membrane. Its function is as follows. F(1)F(0) ATP synthase produces ATP from ADP in the presence of a proton or sodium gradient. F-type ATPases consist of two structural domains, F(1) containing the extramembraneous catalytic core and F(0) containing the membrane proton channel, linked together by a central stalk and a peripheral stalk. During catalysis, ATP synthesis in the catalytic domain of F(1) is coupled via a rotary mechanism of the central stalk subunits to proton translocation. Functionally, this protein is part of the stalk that links CF(0) to CF(1). It either transmits conformational changes from CF(0) to CF(1) or is implicated in proton conduction. This is ATP synthase subunit delta from Bacillus cereus (strain B4264).